Consider the following 624-residue polypeptide: DNA (cytosine-5)-methyltransferase DRM1 (624 aa).

UBA domains lie at 57-100 (RISD…LFNY) and 108-149 (SSKS…LLTY). The disordered stretch occupies residues 160-189 (DMNININDDDDDNLYSLSSDDEEDELNNSS). Positions 166–185 (NDDDDDNLYSLSSDDEEDEL) are enriched in acidic residues. A UBA 3 domain is found at 188-231 (SSNEDRILQALIKMGYLREDAAIAIERCGEDASMEEVVDFICAA). In terms of domain architecture, SAM-dependent MTase DRM-type spans 291-622 (MHRPVPIPDI…EAVRRKARHM (332 aa)).

Belongs to the class I-like SAM-binding methyltransferase superfamily. DRM-methyltransferase family.

Its subcellular location is the nucleus. The enzyme catalyses a 2'-deoxycytidine in DNA + S-adenosyl-L-methionine = a 5-methyl-2'-deoxycytidine in DNA + S-adenosyl-L-homocysteine + H(+). Functionally, involved in de novo DNA methylation. Controls asymmetric and CpNpG methylation. Required for FWA gene silencing but not for the maintenance of SUP gene silencing. Functionally redundant to CMT3 to maintain non-CpG methylation. Involved in RNA-directed DNA methylation. The chain is DNA (cytosine-5)-methyltransferase DRM1 (DRM1) from Arabidopsis thaliana (Mouse-ear cress).